The chain runs to 225 residues: UPF0758 protein Ssed_0385 (225 aa).

Positions 102-224 (ILSDPDLTRD…IVSFAERGWI (123 aa)) constitute an MPN domain. Residues His-173, His-175, and Asp-186 each coordinate Zn(2+). The short motif at 173–186 (HNHPSGVAEPSLAD) is the JAMM motif element.

The protein belongs to the UPF0758 family.

This Shewanella sediminis (strain HAW-EB3) protein is UPF0758 protein Ssed_0385.